Here is a 54-residue protein sequence, read N- to C-terminus: Large ribosomal subunit protein bL33A (54 aa).

It belongs to the bacterial ribosomal protein bL33 family.

In Streptomyces griseus subsp. griseus (strain JCM 4626 / CBS 651.72 / NBRC 13350 / KCC S-0626 / ISP 5235), this protein is Large ribosomal subunit protein bL33A.